Here is a 146-residue protein sequence, read N- to C-terminus: Hemoglobin subunit beta-1 (146 aa).

One can recognise a Globin domain in the interval 2–146 (HWTAEEKHLL…VAHALARRYH (145 aa)). Heme b contacts are provided by histidine 63 and histidine 92.

The protein belongs to the globin family. As to quaternary structure, there are three forms of hemoglobin in Sphenodon: A, A' and D. Hb A is a tetramer of two alpha-A and two beta-1, Hb A' is a tetramer of two alpha-a and two beta-2, Hb D is a tetramer of two alpha-D and two beta-2.

Its function is as follows. Involved in oxygen transport from the lung to the various peripheral tissues. The polypeptide is Hemoglobin subunit beta-1 (HBB1) (Sphenodon punctatus (Tuatara)).